The sequence spans 347 residues: GMP reductase (347 aa).

Position 108–131 (Ala108–Ala131) interacts with NADP(+). Gly181 and Gly183 together coordinate K(+). Cys186 (thioimidate intermediate) is an active-site residue. An NADP(+)-binding site is contributed by Ile216 to Val239.

This sequence belongs to the IMPDH/GMPR family. GuaC type 1 subfamily. Homotetramer.

The catalysed reaction is IMP + NH4(+) + NADP(+) = GMP + NADPH + 2 H(+). Functionally, catalyzes the irreversible NADPH-dependent deamination of GMP to IMP. It functions in the conversion of nucleobase, nucleoside and nucleotide derivatives of G to A nucleotides, and in maintaining the intracellular balance of A and G nucleotides. The protein is GMP reductase of Shewanella halifaxensis (strain HAW-EB4).